The chain runs to 305 residues: Ribosomal RNA small subunit methyltransferase H (305 aa).

Residues 30 to 32 (GGH), Asp-49, Phe-74, Asp-96, and Gln-103 contribute to the S-adenosyl-L-methionine site.

This sequence belongs to the methyltransferase superfamily. RsmH family.

It is found in the cytoplasm. It catalyses the reaction cytidine(1402) in 16S rRNA + S-adenosyl-L-methionine = N(4)-methylcytidine(1402) in 16S rRNA + S-adenosyl-L-homocysteine + H(+). Specifically methylates the N4 position of cytidine in position 1402 (C1402) of 16S rRNA. The sequence is that of Ribosomal RNA small subunit methyltransferase H from Francisella tularensis subsp. novicida (strain U112).